Here is a 90-residue protein sequence, read N- to C-terminus: Barrier-to-autointegration factor A (90 aa).

The protein belongs to the BAF family. In terms of assembly, homodimer. Interacts with nemp1a and nemp1b. Phosphorylated during S and M phases.

The protein localises to the nucleus. It is found in the chromosome. It localises to the nucleus envelope. The protein resides in the cytoplasm. Non-specific DNA-binding protein that plays key roles in mitotic nuclear reassembly, chromatin organization, DNA damage response, gene expression and intrinsic immunity against foreign DNA. Contains two non-specific double-stranded DNA (dsDNA)-binding sites which promote DNA cross-bridging. Plays a key role in nuclear membrane reformation at the end of mitosis by driving formation of a single nucleus in a spindle-independent manner. Transiently cross-bridges anaphase chromosomes via its ability to bridge distant DNA sites, leading to the formation of a dense chromatin network at the chromosome ensemble surface that limits membranes to the surface. Also acts as a negative regulator of innate immune activation by restricting CGAS activity toward self-DNA upon acute loss of nuclear membrane integrity. Outcompetes CGAS for DNA-binding, thereby preventing CGAS activation and subsequent damaging autoinflammatory responses. Also involved in DNA damage response; acts by inhibiting the ADP-ribosyltransferase activity of PARP1. Involved in the recognition of exogenous dsDNA in the cytosol: associates with exogenous dsDNA immediately after its appearance in the cytosol at endosome breakdown and is required to avoid autophagy. The protein is Barrier-to-autointegration factor A (banf1-a) of Xenopus laevis (African clawed frog).